The sequence spans 687 residues: Triadin (687 aa).

Residues 1–47 (MTEITAEGNASITTTVIDNKNGSVPKSPGKVLKRTVTEDIVTTFSSP) are Cytoplasmic-facing. The helical transmembrane segment at 48–68 (AAWLLVIALIITWSAVAIVMF) threads the bilayer. The Lumenal segment spans residues 69-687 (DLVDYKNFSA…NSPGQKQQEQ (619 aa)). Residues 117–130 (DGDEDDEDADEDID) show a composition bias toward acidic residues. Disordered regions lie at residues 117–265 (DGDE…EQKD), 280–643 (GDLK…QKSP), and 660–687 (FQFPVTPVQHSGENPGKSNSPGQKQQEQ). Basic and acidic residues predominate over residues 131 to 265 (KGEIEEPPLK…PAVPKHEQKD (135 aa)). Residues 295-306 (LTASRPALSTPS) are compositionally biased toward polar residues. 2 positions are modified to phosphoserine: S303 and S306. Basic and acidic residues predominate over residues 307–356 (LEEKEKEEKKKVEKKVTSDTKKKEKGEAKKKSEKETVIDGKGKEPGKPPE). Positions 357–370 (TKQTTTKLTTQAAA) are enriched in low complexity. 4 stretches are compositionally biased toward basic and acidic residues: residues 371-390 (TKDEKKEDSKKMKKPPEEKP), 396-431 (EKKEKHIEPAKTPKKEHPAPSEKHRKAKAEQAKEEI), 442-459 (GKKEEKAKTVEQGKDVKP), and 466-501 (LKKEEKSEPQPKKEVKLETQLKKEEKSEPQVKKEAK). The N-linked (GlcNAc...) asparagine glycan is linked to N514. 2 stretches are compositionally biased toward basic and acidic residues: residues 539-583 (TAEK…KVPP) and 594-630 (TRAEKRGKISKDSKDAPAPKKDKDSKDVLHSKKDKEV). 2 stretches are compositionally biased toward polar residues: residues 631 to 643 (TNNVSSPKKQKSP) and 667 to 687 (VQHSGENPGKSNSPGQKQQEQ).

Homooligomer of variable subunit number; disulfide-linked. Interacts with CASQ1 in skeletal muscle. Interacts with CASQ2. Interacts with RYR1 in skeletal muscle. Post-translationally, phosphorylated by CaMK2. In terms of processing, N-glycosylated. Detected in skeletal muscle (at protein level). Detected in skeletal muscle.

The protein resides in the sarcoplasmic reticulum membrane. It localises to the microsome. It is found in the cell membrane. The protein localises to the sarcolemma. Functionally, contributes to the regulation of lumenal Ca2+ release via the sarcoplasmic reticulum calcium release channels RYR1 and RYR2, a key step in triggering skeletal and heart muscle contraction. Required for normal organization of the triad junction, where T-tubules and the sarcoplasmic reticulum terminal cisternae are in close contact. Required for normal skeletal muscle strength. Plays a role in excitation-contraction coupling in the heart and in regulating the rate of heart beats. The polypeptide is Triadin (Rattus norvegicus (Rat)).